The following is a 154-amino-acid chain: Transcriptional repressor NrdR (154 aa).

The segment at 3–34 (CPYCQSEDTQVKDSRPAEDGAAIRRRRACPVC) is a zinc-finger region. In terms of domain architecture, ATP-cone spans 49-139 (LVVVKRTGRK…VYRNFREAKD (91 aa)).

It belongs to the NrdR family. The cofactor is Zn(2+).

In terms of biological role, negatively regulates transcription of bacterial ribonucleotide reductase nrd genes and operons by binding to NrdR-boxes. The sequence is that of Transcriptional repressor NrdR from Chelativorans sp. (strain BNC1).